The primary structure comprises 230 residues: Urease accessory protein UreF (230 aa).

The protein belongs to the UreF family. As to quaternary structure, ureD, UreF and UreG form a complex that acts as a GTP-hydrolysis-dependent molecular chaperone, activating the urease apoprotein by helping to assemble the nickel containing metallocenter of UreC. The UreE protein probably delivers the nickel.

The protein resides in the cytoplasm. Its function is as follows. Required for maturation of urease via the functional incorporation of the urease nickel metallocenter. This Marinomonas sp. (strain MWYL1) protein is Urease accessory protein UreF.